We begin with the raw amino-acid sequence, 186 residues long: Large ribosomal subunit protein uL5 (186 aa).

It belongs to the universal ribosomal protein uL5 family. Part of the 50S ribosomal subunit; part of the 5S rRNA/L5/L18/L25 subcomplex. Contacts the 5S rRNA and the P site tRNA. Forms a bridge to the 30S subunit in the 70S ribosome.

Functionally, this is one of the proteins that bind and probably mediate the attachment of the 5S RNA into the large ribosomal subunit, where it forms part of the central protuberance. In the 70S ribosome it contacts protein S13 of the 30S subunit (bridge B1b), connecting the 2 subunits; this bridge is implicated in subunit movement. Contacts the P site tRNA; the 5S rRNA and some of its associated proteins might help stabilize positioning of ribosome-bound tRNAs. The protein is Large ribosomal subunit protein uL5 of Maricaulis maris (strain MCS10) (Caulobacter maris).